The primary structure comprises 523 residues: ATP synthase subunit beta, mitochondrial (523 aa).

The N-terminal 19 residues, Met-1–Gln-19, are a transit peptide targeting the mitochondrion. Gly-201–Thr-208 contributes to the ATP binding site.

It belongs to the ATPase alpha/beta chains family. In terms of assembly, F-type ATPases have 2 components, CF(1) - the catalytic core - and CF(0) - the membrane proton channel. CF(1) has five subunits: alpha(3), beta(3), gamma(1), delta(1), epsilon(1). CF(0) has three main subunits: a, b and c.

It is found in the mitochondrion. The protein resides in the mitochondrion inner membrane. It catalyses the reaction ATP + H2O + 4 H(+)(in) = ADP + phosphate + 5 H(+)(out). In terms of biological role, mitochondrial membrane ATP synthase (F(1)F(0) ATP synthase or Complex V) produces ATP from ADP in the presence of a proton gradient across the membrane which is generated by electron transport complexes of the respiratory chain. F-type ATPases consist of two structural domains, F(1) - containing the extramembraneous catalytic core, and F(0) - containing the membrane proton channel, linked together by a central stalk and a peripheral stalk. During catalysis, ATP synthesis in the catalytic domain of F(1) is coupled via a rotary mechanism of the central stalk subunits to proton translocation. Subunits alpha and beta form the catalytic core in F(1). Rotation of the central stalk against the surrounding alpha(3)beta(3) subunits leads to hydrolysis of ATP in three separate catalytic sites on the beta subunits. In Hemicentrotus pulcherrimus (Sea urchin), this protein is ATP synthase subunit beta, mitochondrial.